A 114-amino-acid chain; its full sequence is Macrophage migration inhibitory factor homolog (114 aa).

The active-site Proton acceptor; via imino nitrogen is proline 2. Substrate is bound by residues lysine 33 and isoleucine 65.

Belongs to the MIF family.

It localises to the secreted. It carries out the reaction L-dopachrome = 5,6-dihydroxyindole-2-carboxylate. It catalyses the reaction 3-phenylpyruvate = enol-phenylpyruvate. Its function is as follows. Tautomerization of the methyl ester of L-dopachrome. Inhibits migration of human peripheral blood mononuclear cells. The chain is Macrophage migration inhibitory factor homolog from Trichinella spiralis (Trichina worm).